The primary structure comprises 1568 residues: Myosin-2 (1568 aa).

The Myosin N-terminal SH3-like domain occupies 4-57 (EVGTRCWYPHKELGWIGAEVIKNEVKDGKYHLELSLEDDEVVSVDTEDLNDDKN). Residues 70–783 (EATEDLTSLS…MLAYLEKLRS (714 aa)) form the Myosin motor domain. 164 to 171 (GESGAGKT) serves as a coordination point for ATP. Positions 443-523 (FIGVLDIYGF…LGILSLLDEE (81 aa)) are actin-binding. Positions 619-641 (KKAELEQNNPGNKKPGPARTVNR) are disordered. 6 IQ domains span residues 786 to 808 (MHNS…QYLK), 809 to 833 (ISQA…YHEM), 834 to 856 (KVHS…NVFN), 857 to 881 (VLIT…KREH), 882 to 904 (EYNA…TFLN), and 905 to 934 (TKRD…DAKS). Positions 944 to 1088 (KLENKVIELT…ISRLQTAMSL (145 aa)) form a coiled coil. Positions 1089 to 1568 (GTVTTSVLPQ…VAQQVVQDGH (480 aa)) are non alpha-helical, tail domain. The Dilute domain maps to 1223-1498 (AQVLTTIQKV…LRYVADIVKK (276 aa)).

Belongs to the TRAFAC class myosin-kinesin ATPase superfamily. Myosin family. As to quaternary structure, homodimer. Interacts with calmodulin (CMD1) and the myosin light chain MLC1 through its IQ repeats.

Its function is as follows. Myosin heavy chain that is required for the cell cycle-regulated transport of various organelles and proteins for their segregation. Functions by binding with its tail domain to receptor proteins on organelles and exerting force with its N-terminal motor domain against actin filaments, thereby transporting its cargo along polarized actin cables. The polypeptide is Myosin-2 (MYO2) (Saccharomyces uvarum (strain ATCC 76518 / CBS 7001 / CLIB 283 / NBRC 10550 / MCYC 623 / NCYC 2669 / NRRL Y-11845) (Yeast)).